A 360-amino-acid polypeptide reads, in one-letter code: Phospho-N-acetylmuramoyl-pentapeptide-transferase (360 aa).

10 helical membrane-spanning segments follow: residues 21–41 (YITFRAIMALLTAMGIGLWIG), 73–93 (TMGGIMILIAIGVSTLLWADL), 98–118 (IWFVLFVLFGYGAVGFVDDYW), 132–152 (WKYFWLSVIALIAVFGIYAVG), 168–188 (VMPQLGIFFIILSYFVIVGTS), 199–219 (GLAIVPTIMVASAFALIAWAT), 236–256 (AGELVILCTAIVGAGLGFLWY), 263–283 (VFMGDVGSLSLGGALGTIAVL), 288–308 (LLLVIMGGVFVVEALSVILQV), and 338–358 (VIVRFWIITLMLVLIGLVTLK).

The protein belongs to the glycosyltransferase 4 family. MraY subfamily. It depends on Mg(2+) as a cofactor.

The protein resides in the cell inner membrane. The catalysed reaction is UDP-N-acetyl-alpha-D-muramoyl-L-alanyl-gamma-D-glutamyl-meso-2,6-diaminopimeloyl-D-alanyl-D-alanine + di-trans,octa-cis-undecaprenyl phosphate = di-trans,octa-cis-undecaprenyl diphospho-N-acetyl-alpha-D-muramoyl-L-alanyl-D-glutamyl-meso-2,6-diaminopimeloyl-D-alanyl-D-alanine + UMP. The protein operates within cell wall biogenesis; peptidoglycan biosynthesis. Functionally, catalyzes the initial step of the lipid cycle reactions in the biosynthesis of the cell wall peptidoglycan: transfers peptidoglycan precursor phospho-MurNAc-pentapeptide from UDP-MurNAc-pentapeptide onto the lipid carrier undecaprenyl phosphate, yielding undecaprenyl-pyrophosphoryl-MurNAc-pentapeptide, known as lipid I. This Actinobacillus pleuropneumoniae serotype 5b (strain L20) protein is Phospho-N-acetylmuramoyl-pentapeptide-transferase.